An 88-amino-acid chain; its full sequence is Small ribosomal subunit protein uS15 (88 aa).

Residues 1 to 20 (MLATEKKQELIDQYKRHEGD) show a composition bias toward basic and acidic residues. Residues 1–21 (MLATEKKQELIDQYKRHEGDT) form a disordered region.

Belongs to the universal ribosomal protein uS15 family. In terms of assembly, part of the 30S ribosomal subunit. Forms a bridge to the 50S subunit in the 70S ribosome, contacting the 23S rRNA.

Functionally, one of the primary rRNA binding proteins, it binds directly to 16S rRNA where it helps nucleate assembly of the platform of the 30S subunit by binding and bridging several RNA helices of the 16S rRNA. In terms of biological role, forms an intersubunit bridge (bridge B4) with the 23S rRNA of the 50S subunit in the ribosome. The chain is Small ribosomal subunit protein uS15 from Syntrophotalea carbinolica (strain DSM 2380 / NBRC 103641 / GraBd1) (Pelobacter carbinolicus).